The sequence spans 161 residues: UPF0178 protein BOV_1904 (161 aa).

It belongs to the UPF0178 family.

This chain is UPF0178 protein BOV_1904, found in Brucella ovis (strain ATCC 25840 / 63/290 / NCTC 10512).